Reading from the N-terminus, the 144-residue chain is MIAIARQNRVRISPQKARLVCQLIKNKSVIEAQNILVNTDKKGARIILKLLNSVIANATNNHAMLAEKLYVYEVVANQGPTLKRNLPRAKGSADMIRKRSTNFVIKLSDDKNERKHEVEAIKTRLKKRVLGQNKRKQSVSGEKK.

A compositionally biased stretch (basic residues) spans 124-137; the sequence is RLKKRVLGQNKRKQ. The disordered stretch occupies residues 124–144; the sequence is RLKKRVLGQNKRKQSVSGEKK.

It belongs to the universal ribosomal protein uL22 family. As to quaternary structure, part of the 50S ribosomal subunit.

Functionally, this protein binds specifically to 23S rRNA; its binding is stimulated by other ribosomal proteins, e.g. L4, L17, and L20. It is important during the early stages of 50S assembly. It makes multiple contacts with different domains of the 23S rRNA in the assembled 50S subunit and ribosome. The globular domain of the protein is located near the polypeptide exit tunnel on the outside of the subunit, while an extended beta-hairpin is found that lines the wall of the exit tunnel in the center of the 70S ribosome. The protein is Large ribosomal subunit protein uL22 of Mycoplasmoides gallisepticum (strain R(low / passage 15 / clone 2)) (Mycoplasma gallisepticum).